A 135-amino-acid chain; its full sequence is NADPH-dependent 7-cyano-7-deazaguanine reductase (135 aa).

The Thioimide intermediate role is filled by cysteine 48. The Proton donor role is filled by aspartate 55. Residues 70–72 and 89–90 each bind substrate; these read IEL and HE.

It belongs to the GTP cyclohydrolase I family. QueF type 1 subfamily.

The protein resides in the cytoplasm. The enzyme catalyses 7-aminomethyl-7-carbaguanine + 2 NADP(+) = 7-cyano-7-deazaguanine + 2 NADPH + 3 H(+). The protein operates within tRNA modification; tRNA-queuosine biosynthesis. Functionally, catalyzes the NADPH-dependent reduction of 7-cyano-7-deazaguanine (preQ0) to 7-aminomethyl-7-deazaguanine (preQ1). The protein is NADPH-dependent 7-cyano-7-deazaguanine reductase of Prochlorococcus marinus (strain MIT 9313).